A 298-amino-acid chain; its full sequence is GPN-loop GTPase QQT1 (298 aa).

Residue 12–17 (GSGKTT) participates in GTP binding. A Gly-Pro-Asn (GPN)-loop; involved in dimer interface motif is present at residues 69 to 71 (GPN). 173–176 (SKID) provides a ligand contact to GTP.

This sequence belongs to the GPN-loop GTPase family. As to quaternary structure, heterodimer with QQT2. As to expression, expressed in vascular tissues, root tips, apical and root meristematic regions, and floral primordia.

Its subcellular location is the cytoplasm. The protein resides in the nucleus. The protein localises to the cytoskeleton. It is found in the spindle. It localises to the phragmoplast. Small GTPase that is essential for the correct formation of the tangential divisions in early embryos. Associates with microtubule during mitosis and may function in the positioning of the division plane. May participate in the patterning of the early embryo at the octant-dermatogen transition. Is crucial for normal development of the plant. This chain is GPN-loop GTPase QQT1, found in Arabidopsis thaliana (Mouse-ear cress).